A 461-amino-acid chain; its full sequence is Cysteine--tRNA ligase (461 aa).

C28 is a Zn(2+) binding site. The short motif at 30 to 40 (VTIYDLCHIGH) is the 'HIGH' region element. Zn(2+)-binding residues include C209, H234, and E238. The short motif at 266–270 (KMSKS) is the 'KMSKS' region element. Position 269 (K269) interacts with ATP.

Belongs to the class-I aminoacyl-tRNA synthetase family. As to quaternary structure, monomer. Zn(2+) is required as a cofactor.

It is found in the cytoplasm. It carries out the reaction tRNA(Cys) + L-cysteine + ATP = L-cysteinyl-tRNA(Cys) + AMP + diphosphate. This chain is Cysteine--tRNA ligase, found in Edwardsiella ictaluri (strain 93-146).